The primary structure comprises 289 residues: dTDP-rhamnosyl transferase RfbG (289 aa).

The protein belongs to the glycosyltransferase 2 family.

It functions in the pathway bacterial outer membrane biogenesis; lipopolysaccharide biosynthesis. The chain is dTDP-rhamnosyl transferase RfbG (rfbG) from Shigella flexneri.